The chain runs to 223 residues: Ribose-5-phosphate isomerase A (223 aa).

Substrate is bound by residues 29–32 (TGST), 82–85 (DGAD), and 95–98 (KGGG). The active-site Proton acceptor is the glutamate 104. Lysine 122 lines the substrate pocket.

Belongs to the ribose 5-phosphate isomerase family. As to quaternary structure, homodimer.

It carries out the reaction aldehydo-D-ribose 5-phosphate = D-ribulose 5-phosphate. Its pathway is carbohydrate degradation; pentose phosphate pathway; D-ribose 5-phosphate from D-ribulose 5-phosphate (non-oxidative stage): step 1/1. In terms of biological role, catalyzes the reversible conversion of ribose-5-phosphate to ribulose 5-phosphate. The polypeptide is Ribose-5-phosphate isomerase A (Neisseria meningitidis serogroup B (strain ATCC BAA-335 / MC58)).